The sequence spans 921 residues: Sodium/calcium exchanger 2 (921 aa).

Positions 1 to 20 are cleaved as a signal peptide; that stretch reads MAPLALVGVALLLGAPHCLG. Topologically, residues 21 to 68 are extracellular; it reads EATPTPSLPPPPANDSDASPGGCQGSYRCQPGVLLPVWEPDDPSLGDK. Residues 23 to 42 are disordered; sequence TPTPSLPPPPANDSDASPGG. A glycan (N-linked (GlcNAc...) asparagine) is linked at asparagine 34. Residues 69 to 90 traverse the membrane as a helical segment; it reads AARAVVYFVAMVYMFLGLSIIA. Residues 91-130 lie on the Cytoplasmic side of the membrane; it reads DRFMASIEVITSKEKEITITKANGETSVGTVRIWNETVSN. A helical transmembrane segment spans residues 131-152; the sequence is LTLMALGSSAPEILLSVIEVCG. One copy of the Alpha-1 repeat lies at 135–175; it reads ALGSSAPEILLSVIEVCGHNFQAGELGPGTIVGSAAFNMFV. Over 153 to 164 the chain is Extracellular; it reads HNFQAGELGPGT. The helical transmembrane segment at 165-185 threads the bilayer; the sequence is IVGSAAFNMFVVIAVCVYVIP. Over 186 to 196 the chain is Cytoplasmic; sequence AGESRKIKHLR. Residues 197-219 form a helical membrane-spanning segment; that stretch reads VFFVTASWSIFAYVWLYLILAVF. The Extracellular segment spans residues 220–222; it reads SPG. A helical membrane pass occupies residues 223 to 246; sequence VVQVWEALLTLVFFPVCVVFAWMA. Residues 247–720 lie on the Cytoplasmic side of the membrane; sequence DKRLLFYKYV…DGSREERLPS (474 aa). The putative calmodulin-binding region stretch occupies residues 248–267; sequence KRLLFYKYVYKRYRTDPRSG. Residues 372-391 are disordered; that stretch reads AADAARRPGANDGAPDDEDD. 2 consecutive Calx-beta domains span residues 384–483 and 512–612; these read GAPD…VRLL and ATVT…IELG. Positions 407, 443, 468, 469, 471, 473, 476, 518, 519, 520, 536, 598, 599, and 600 each coordinate Ca(2+). Position 622 is a phosphoserine (serine 622). Ca(2+) is bound at residue glutamate 665. Residues 721-740 form a helical membrane-spanning segment; it reads CFDYVMHFLTVFWKVLFACL. Residues 741–747 lie on the Extracellular side of the membrane; that stretch reads PPTEYCH. A helical transmembrane segment spans residues 748–770; the sequence is GWACFGVCILVIGLLTALIGDLA. At 771-772 the chain is on the cytoplasmic side; the sequence is SH. Residues 773–791 traverse the membrane as a helical segment; that stretch reads FGCTVGLKDSVNAVVFVAL. The stretch at 790 to 826 is one Alpha-2 repeat; sequence ALGTSIPDTFASKVAALQDQCADASIGNVTGSNAVNV. Residues 792–822 lie on the Extracellular side of the membrane; it reads GTSIPDTFASKVAALQDQCADASIGNVTGSN. Asparagine 817 carries N-linked (GlcNAc...) asparagine glycosylation. Residues 823-843 form a helical membrane-spanning segment; that stretch reads AVNVFLGLGVAWSVAAVYWAV. Over 844–854 the chain is Cytoplasmic; it reads QGRPFEVRTGT. Residues 855-875 form a helical membrane-spanning segment; it reads LAFSVTLFTVFAFVGIAVLLY. The Extracellular portion of the chain corresponds to 876–892; it reads RRRPHIGGELGGPRGPK. The chain crosses the membrane as a helical span at residues 893 to 909; it reads LATTALFLGLWFLYILF. Residues 910-921 lie on the Cytoplasmic side of the membrane; it reads ASLEAYCHIRGF.

This sequence belongs to the Ca(2+):cation antiporter (CaCA) (TC 2.A.19) family. SLC8 subfamily. As to expression, detected in neocortex and hippocampus on pyramidal cells, astrocyte processes and dendrites (at protein level). Brain and skeletal muscle.

It localises to the cell membrane. It is found in the basolateral cell membrane. The protein localises to the perikaryon. Its subcellular location is the cell projection. The protein resides in the dendrite. It localises to the dendritic spine. It catalyses the reaction Ca(2+)(in) + 3 Na(+)(out) = Ca(2+)(out) + 3 Na(+)(in). Calcium transport is down-regulated by Na(+) and stimulated by Ca(2+). In terms of biological role, mediates the electrogenic exchange of Ca(2+) against Na(+) ions across the cell membrane, and thereby contributes to the regulation of cytoplasmic Ca(2+) levels and Ca(2+)-dependent cellular processes. Contributes to cellular Ca(2+) homeostasis in excitable cells. Contributes to the rapid decrease of cytoplasmic Ca(2+) levels back to baseline after neuronal activation, and thereby contributes to modulate synaptic plasticity, learning and memory. Plays a role in regulating urinary Ca(2+) and Na(+) excretion. The chain is Sodium/calcium exchanger 2 (Slc8a2) from Rattus norvegicus (Rat).